Here is a 97-residue protein sequence, read N- to C-terminus: UPF0729 protein AAEL015238 (97 aa).

The interval 69-97 (EVAASGSGSNGTATAVGSEGEAEETKKSQ) is disordered. Residues 74–83 (GSGSNGTATA) show a composition bias toward polar residues.

Belongs to the UPF0729 family.

The sequence is that of UPF0729 protein AAEL015238 from Aedes aegypti (Yellowfever mosquito).